The following is a 618-amino-acid chain: ELMO domain-containing protein C (618 aa).

A coiled-coil region spans residues 1–72 (MERYRIRRER…EELRLQGDRF (72 aa)). Disordered stretches follow at residues 153 to 175 (NFDNNNNNNNNSNNNNNGNKPSL) and 245 to 276 (TTTTTTTTTTTTTTTTTTTTTTTTTPTSSTTV). Low complexity-rich tracts occupy residues 156-171 (NNNNNNNNSNNNNNGN) and 245-275 (TTTTTTTTTTTTTTTTTTTTTTTTTPTSSTT). An ELMO domain is found at 382–545 (DHEEYLKHLW…KLKSQLNEIS (164 aa)). Low complexity-rich tracts occupy residues 574–592 (QQQQQLQQQQQSLPLPSSP) and 602–618 (TTTSSTSISPSKNTQNN). Residues 574–618 (QQQQQLQQQQQSLPLPSSPRSFLNNYQQTTTSSTSISPSKNTQNN) form a disordered region.

In Dictyostelium discoideum (Social amoeba), this protein is ELMO domain-containing protein C (elmoC).